The sequence spans 1164 residues: DNA-directed RNA polymerase 133 kDa polypeptide (1164 aa).

This sequence belongs to the RNA polymerase beta chain family. In terms of assembly, the DNA-dependent RNA polymerase used for intermediate and late genes expression consists of eight subunits 147 kDa, 133 kDa, 35 kDa, 30 kDa, 22 kDa, 19 kDa, 18 kDa and 7 kDa totalling more than 500 kDa in mass. The same holoenzyme, with the addition of the transcription-specificity factor RAP94, is used for early gene expression.

The protein localises to the virion. The enzyme catalyses RNA(n) + a ribonucleoside 5'-triphosphate = RNA(n+1) + diphosphate. Functionally, part of the DNA-dependent RNA polymerase which catalyzes the transcription of viral DNA into RNA using the four ribonucleoside triphosphates as substrates. Responsible for the transcription of early, intermediate and late genes. DNA-dependent RNA polymerase associates with the early transcription factor (ETF), itself composed of OPG118 and OPG133, thereby allowing the early genes transcription. Late transcription, and probably also intermediate transcription, require newly synthesized RNA polymerase. In Homo sapiens (Human), this protein is DNA-directed RNA polymerase 133 kDa polypeptide (OPG151).